Reading from the N-terminus, the 244-residue chain is Uridylate kinase (244 aa).

Position 17-20 (17-20 (KVSG)) interacts with ATP. Residues 25–30 (GEKGFG) form an involved in allosteric activation by GTP region. Gly59 provides a ligand contact to UMP. ATP-binding residues include Gly60 and Arg64. UMP is bound by residues Asp80 and 141–148 (VGNPFFTT). Residues Thr168, Gln169, Tyr174, and Asp177 each coordinate ATP.

This sequence belongs to the UMP kinase family. In terms of assembly, homohexamer.

The protein localises to the cytoplasm. It catalyses the reaction UMP + ATP = UDP + ADP. Its pathway is pyrimidine metabolism; CTP biosynthesis via de novo pathway; UDP from UMP (UMPK route): step 1/1. Allosterically activated by GTP. Inhibited by UTP. Functionally, catalyzes the reversible phosphorylation of UMP to UDP. The sequence is that of Uridylate kinase from Ehrlichia canis (strain Jake).